A 650-amino-acid chain; its full sequence is DNA gyrase subunit B (650 aa).

One can recognise a Toprim domain in the interval Asn-429–Pro-543. Mg(2+) contacts are provided by Glu-435, Asp-508, and Asp-510.

It belongs to the type II topoisomerase GyrB family. Heterotetramer, composed of two GyrA and two GyrB chains. In the heterotetramer, GyrA contains the active site tyrosine that forms a transient covalent intermediate with DNA, while GyrB binds cofactors and catalyzes ATP hydrolysis. It depends on Mg(2+) as a cofactor. The cofactor is Mn(2+). Requires Ca(2+) as cofactor.

It is found in the cytoplasm. The catalysed reaction is ATP-dependent breakage, passage and rejoining of double-stranded DNA.. A type II topoisomerase that negatively supercoils closed circular double-stranded (ds) DNA in an ATP-dependent manner to modulate DNA topology and maintain chromosomes in an underwound state. Negative supercoiling favors strand separation, and DNA replication, transcription, recombination and repair, all of which involve strand separation. Also able to catalyze the interconversion of other topological isomers of dsDNA rings, including catenanes and knotted rings. Type II topoisomerases break and join 2 DNA strands simultaneously in an ATP-dependent manner. In Streptococcus pyogenes serotype M1, this protein is DNA gyrase subunit B.